A 289-amino-acid chain; its full sequence is MFGSAHGDTTSSDTSGRRPLRLVVLPLLLALSSCKVDLYTQLQEREANEIVALLMDNGVDAVRVAGKDGTSTIQVDEKLLAFSIKLLNGKGLPRQSFKNLGEIFQGSGLIASPTEERARYVYALSEELSHTISDIDGVFSARVHVVLPHNDLLRAGDTPSSASVFIRHDAKTNLPALLPKIKMLVAESIEGLAYDKVEVVLVPVERSAQEQRSLLEPDLAQASRPIPVPLLAVAVGVGAAVFAVTCYLLFIVLGHRRRQLTGELSRVQERPGVSALAAIRKKIPALGRR.

A signal peptide spans methionine 1–serine 33. Cysteine 34 carries N-palmitoyl cysteine lipidation. Residue cysteine 34 is the site of S-diacylglycerol cysteine attachment. The helical transmembrane segment at valine 233–leucine 253 threads the bilayer.

This sequence belongs to the YscJ lipoprotein family.

The protein resides in the cell outer membrane. Regulates cultivar-specific nodulation of soybean. This Rhizobium fredii (Sinorhizobium fredii) protein is Nodulation protein NolT (nolT).